The following is a 549-amino-acid chain: Glucose-6-phosphate isomerase (549 aa).

Glutamate 355 functions as the Proton donor in the catalytic mechanism. Active-site residues include histidine 386 and lysine 514.

It belongs to the GPI family.

It localises to the cytoplasm. The catalysed reaction is alpha-D-glucose 6-phosphate = beta-D-fructose 6-phosphate. It functions in the pathway carbohydrate biosynthesis; gluconeogenesis. The protein operates within carbohydrate degradation; glycolysis; D-glyceraldehyde 3-phosphate and glycerone phosphate from D-glucose: step 2/4. Catalyzes the reversible isomerization of glucose-6-phosphate to fructose-6-phosphate. The sequence is that of Glucose-6-phosphate isomerase from Pectobacterium carotovorum subsp. carotovorum (strain PC1).